We begin with the raw amino-acid sequence, 429 residues long: Adenylosuccinate synthetase (429 aa).

Residues Gly13 to Lys19 and Gly41 to Thr43 each bind GTP. Asp14 acts as the Proton acceptor in catalysis. Positions 14 and 41 each coordinate Mg(2+). Residues Asp14 to Lys17, Asn39 to His42, Thr130, Arg144, Gln224, Thr239, and Arg303 contribute to the IMP site. The Proton donor role is filled by His42. Ala299 to Arg305 serves as a coordination point for substrate. GTP is bound by residues Arg305, Lys331–Asp333, and Ser412–Gly414.

It belongs to the adenylosuccinate synthetase family. In terms of assembly, homodimer. Mg(2+) serves as cofactor.

It is found in the cytoplasm. The catalysed reaction is IMP + L-aspartate + GTP = N(6)-(1,2-dicarboxyethyl)-AMP + GDP + phosphate + 2 H(+). Its pathway is purine metabolism; AMP biosynthesis via de novo pathway; AMP from IMP: step 1/2. Its function is as follows. Plays an important role in the de novo pathway of purine nucleotide biosynthesis. Catalyzes the first committed step in the biosynthesis of AMP from IMP. This chain is Adenylosuccinate synthetase, found in Psychrobacter arcticus (strain DSM 17307 / VKM B-2377 / 273-4).